A 251-amino-acid polypeptide reads, in one-letter code: UPF0309 protein SAV_3856 (251 aa).

The SIS domain occupies 36–220 (IADTVADGGR…AGTLADRGIE (185 aa)).

The protein belongs to the UPF0309 family.

The polypeptide is UPF0309 protein SAV_3856 (Streptomyces avermitilis (strain ATCC 31267 / DSM 46492 / JCM 5070 / NBRC 14893 / NCIMB 12804 / NRRL 8165 / MA-4680)).